The chain runs to 356 residues: Holliday junction branch migration complex subunit RuvB (356 aa).

A large ATPase domain (RuvB-L) region spans residues 4 to 191 (TDKLATEQRI…FGIVARLEFY (188 aa)). Residues Leu30, Arg31, Gly72, Lys75, Thr76, Thr77, 138–140 (EDY), Arg181, Tyr191, and Arg228 each bind ATP. Thr76 is a binding site for Mg(2+). The segment at 192 to 262 (DAEQLSRIVR…VADAALAMLD (71 aa)) is small ATPAse domain (RuvB-S). Residues 265-356 (PVGFDLMDRK…RGEWDTPDGK (92 aa)) form a head domain (RuvB-H) region. Positions 301, 320, and 325 each coordinate DNA.

The protein belongs to the RuvB family. In terms of assembly, homohexamer. Forms an RuvA(8)-RuvB(12)-Holliday junction (HJ) complex. HJ DNA is sandwiched between 2 RuvA tetramers; dsDNA enters through RuvA and exits via RuvB. An RuvB hexamer assembles on each DNA strand where it exits the tetramer. Each RuvB hexamer is contacted by two RuvA subunits (via domain III) on 2 adjacent RuvB subunits; this complex drives branch migration. In the full resolvosome a probable DNA-RuvA(4)-RuvB(12)-RuvC(2) complex forms which resolves the HJ.

It is found in the cytoplasm. It carries out the reaction ATP + H2O = ADP + phosphate + H(+). The RuvA-RuvB-RuvC complex processes Holliday junction (HJ) DNA during genetic recombination and DNA repair, while the RuvA-RuvB complex plays an important role in the rescue of blocked DNA replication forks via replication fork reversal (RFR). RuvA specifically binds to HJ cruciform DNA, conferring on it an open structure. The RuvB hexamer acts as an ATP-dependent pump, pulling dsDNA into and through the RuvAB complex. RuvB forms 2 homohexamers on either side of HJ DNA bound by 1 or 2 RuvA tetramers; 4 subunits per hexamer contact DNA at a time. Coordinated motions by a converter formed by DNA-disengaged RuvB subunits stimulates ATP hydrolysis and nucleotide exchange. Immobilization of the converter enables RuvB to convert the ATP-contained energy into a lever motion, pulling 2 nucleotides of DNA out of the RuvA tetramer per ATP hydrolyzed, thus driving DNA branch migration. The RuvB motors rotate together with the DNA substrate, which together with the progressing nucleotide cycle form the mechanistic basis for DNA recombination by continuous HJ branch migration. Branch migration allows RuvC to scan DNA until it finds its consensus sequence, where it cleaves and resolves cruciform DNA. The protein is Holliday junction branch migration complex subunit RuvB of Burkholderia lata (strain ATCC 17760 / DSM 23089 / LMG 22485 / NCIMB 9086 / R18194 / 383).